The primary structure comprises 306 residues: Ornithine carbamoyltransferase (306 aa).

Carbamoyl phosphate-binding positions include 46–49 (STRT), Q73, R97, and 124–127 (HPTQ). L-ornithine contacts are provided by residues N156, D220, and 224-225 (SM). Residues 260 to 261 (CL) and R288 contribute to the carbamoyl phosphate site.

This sequence belongs to the aspartate/ornithine carbamoyltransferase superfamily. OTCase family.

The protein resides in the cytoplasm. The catalysed reaction is carbamoyl phosphate + L-ornithine = L-citrulline + phosphate + H(+). It participates in amino-acid biosynthesis; L-arginine biosynthesis; L-arginine from L-ornithine and carbamoyl phosphate: step 1/3. Functionally, reversibly catalyzes the transfer of the carbamoyl group from carbamoyl phosphate (CP) to the N(epsilon) atom of ornithine (ORN) to produce L-citrulline. This Campylobacter jejuni (strain RM1221) protein is Ornithine carbamoyltransferase.